The sequence spans 594 residues: Acyl-coenzyme A thioesterase 11 (594 aa).

Residues 1–20 (MIQNVGNHLRRGFASMFSNR) constitute a mitochondrion transit peptide. Ser15 and Ser25 each carry phosphoserine. The tract at residues 20 to 43 (RTSRKSISHPESGDPPTMAEGEGY) is disordered. A HotDog ACOT-type 1 domain is found at 45–157 (NPTEVQMSQL…LATFVAHREL (113 aa)). Residues 93–95 (TAS), 122–124 (NSS), Arg183, and 272–274 (HFR) each bind CoA. A HotDog ACOT-type 2 domain is found at 217-330 (EKTRVESVEL…FMTFVVLDKD (114 aa)). Positions 370–582 (KQAEVALSVP…FKACESFLLD (213 aa)) constitute an START domain.

It is found in the mitochondrion matrix. The protein localises to the cytoplasm. The catalysed reaction is hexadecanoyl-CoA + H2O = hexadecanoate + CoA + H(+). It catalyses the reaction tetradecanoyl-CoA + H2O = tetradecanoate + CoA + H(+). The enzyme catalyses dodecanoyl-CoA + H2O = dodecanoate + CoA + H(+). It carries out the reaction butanoyl-CoA + H2O = butanoate + CoA + H(+). It functions in the pathway lipid metabolism; fatty acid metabolism. Functionally, has an acyl-CoA thioesterase activity with a preference for the long chain fatty acyl-CoA thioesters hexadecanoyl-CoA/palmitoyl-CoA and tetradecanoyl-CoA/myristoyl-CoA which are the main substrates in the mitochondrial beta-oxidation pathway. The protein is Acyl-coenzyme A thioesterase 11 (Acot11) of Mus musculus (Mouse).